The primary structure comprises 793 residues: Caldesmon (793 aa).

Arg-12 carries the post-translational modification Phosphoserine. Phosphotyrosine is present on Glu-21. Disordered regions lie at residues 26 to 94 (AYQR…DDEA), 108 to 407 (QKRL…IKGE), and 434 to 458 (KKQG…KPTF). Residues 26 to 207 (AYQRNDDDEE…PKRGSIGENQ (182 aa)) are myosin and calmodulin-binding. The span at 47 to 56 (QERLRQKQEE) shows a compositional bias: basic and acidic residues. A compositionally biased stretch (polar residues) spans 60–74 (GQVTDQVEVNAQNSV). Over residues 108 to 122 (QKRLQEALERQKEFD) the composition is skewed to basic and acidic residues. Ser-129 carries the post-translational modification Phosphoserine. Basic and acidic residues-rich tracts occupy residues 146 to 162 (TTEK…RYEI) and 173 to 188 (QKND…KEDK). 2 positions are modified to phosphoserine: Glu-196 and Ser-202. Residues Ile-203 and Glu-209 each participate in a glycyl lysine isopeptide (Lys-Gly) (interchain with G-Cter in SUMO2) cross-link. Basic and acidic residues-rich tracts occupy residues 236-407 (EEPK…IKGE) and 435-458 (KQGE…KPTF). 3 tandem repeats follow at residues 319–332 (EEEK…QRIK), 333–346 (EEEK…QRIK), and 347–360 (EEEK…QRIK). The interval 319-375 (EEEKRAAEERQRIKEEEKRAAEERQRIKEEEKRAAEERQRIKEEEKRAAEERQRARA) is 3 X 14 AA tandem repeats of E-E-E-K-R-A-A-E-E-R-Q-R-I-K. A Glycyl lysine isopeptide (Lys-Gly) (interchain with G-Cter in SUMO2) cross-link involves residue Lys-459. Residues 492–640 (KSQNGEFMTH…KKPFKCFTPK (149 aa)) form a disordered region. 2 stretches are compositionally biased toward basic and acidic residues: residues 532 to 558 (AGKR…KQKQ) and 566 to 633 (EELK…DKKP). Positions 564–621 (ELEELKKKREERRKVLEEEEQRRKQEEADRKLREEEEKRRLKEEIERRRAEAAEKRQK) are tropomyosin-binding. At Ser-643 the chain carries Phosphoserine. Lys-645 is covalently cross-linked (Glycyl lysine isopeptide (Lys-Gly) (interchain with G-Cter in SUMO2)). The segment at 653-686 (LNKSVQKSSGVKSTHQAAIVSKIDSRLEQYTSAI) is strong actin-binding. Ser-656 is modified (phosphoserine). Residues 664 to 674 (KSTHQAAIVSK) are tropomyosin-binding. Disordered regions lie at residues 687–706 (EGTK…PVPA), 721–740 (VFSS…GLKV), and 747–793 (NEWL…PTKV). A calmodulin-binding region spans residues 716-722 (WEKGNVF). Over residues 721 to 733 (VFSSPTAAGTPNK) the composition is skewed to polar residues. Ser-724 is subject to Phosphoserine. Phosphothreonine occurs at positions 730 and 753. The residue at position 759 (Ser-759) is a Phosphoserine. The segment covering 765-784 (SDLRPGDVSSKRNLWEKQSV) has biased composition (basic and acidic residues). A weak actin-binding region spans residues 768-793 (RPGDVSSKRNLWEKQSVDKVTSPTKV). At Ser-789 the chain carries Phosphoserine.

The protein belongs to the caldesmon family. In non-muscle cells, phosphorylation by CDK1 during mitosis causes caldesmon to dissociate from microfilaments. Phosphorylation reduces caldesmon binding to actin, myosin, and calmodulin as well as its inhibition of actomyosin ATPase activity. Phosphorylation also occurs in both quiescent and dividing smooth muscle cells with similar effects on the interaction with actin and calmodulin and on microfilaments reorganization. CDK1-mediated phosphorylation promotes Schwann cell migration during peripheral nerve regeneration. As to expression, high-molecular-weight caldesmon (isoform 1) is predominantly expressed in smooth muscles, whereas low-molecular-weight caldesmon (isoforms 2, 3, 4 and 5) are widely distributed in non-muscle tissues and cells. Not expressed in skeletal muscle or heart.

The protein resides in the cytoplasm. It localises to the cytoskeleton. Its subcellular location is the myofibril. It is found in the stress fiber. In terms of biological role, actin- and myosin-binding protein implicated in the regulation of actomyosin interactions in smooth muscle and nonmuscle cells (could act as a bridge between myosin and actin filaments). Stimulates actin binding of tropomyosin which increases the stabilization of actin filament structure. In muscle tissues, inhibits the actomyosin ATPase by binding to F-actin. This inhibition is attenuated by calcium-calmodulin and is potentiated by tropomyosin. Interacts with actin, myosin, two molecules of tropomyosin and with calmodulin. Also plays an essential role during cellular mitosis and receptor capping. Involved in Schwann cell migration during peripheral nerve regeneration. The sequence is that of Caldesmon (CALD1) from Homo sapiens (Human).